We begin with the raw amino-acid sequence, 227 residues long: Cytidylate kinase (227 aa).

An ATP-binding site is contributed by 12 to 20 (GPSGAGKGT).

It belongs to the cytidylate kinase family. Type 1 subfamily.

The protein resides in the cytoplasm. The catalysed reaction is CMP + ATP = CDP + ADP. It catalyses the reaction dCMP + ATP = dCDP + ADP. This is Cytidylate kinase from Xanthomonas euvesicatoria pv. vesicatoria (strain 85-10) (Xanthomonas campestris pv. vesicatoria).